Here is an 889-residue protein sequence, read N- to C-terminus: Cytoplasmic aconitate hydratase (889 aa).

Substrate is bound by residues glutamine 86 and 205–207 (DSH). [4Fe-4S] cluster-binding residues include cysteine 437, cysteine 503, and cysteine 506. Substrate-binding positions include arginine 536, arginine 541, arginine 699, and 779–780 (SR).

This sequence belongs to the aconitase/IPM isomerase family. [4Fe-4S] cluster is required as a cofactor.

It is found in the cytoplasm. It localises to the cytosol. It carries out the reaction citrate = D-threo-isocitrate. Bifunctional iron sensor that switches between 2 activities depending on iron availability. Iron deprivation, promotes its mRNA binding activity through which it regulates the expression of genes involved in iron uptake, sequestration and utilization. Binds to iron-responsive elements (IRES) in the untranslated region of target mRNAs preventing for instance the translation of ferritin and aminolevulinic acid synthase and stabilizing the transferrin receptor mRNA. In terms of biological role, conversely, when cellular iron levels are high, binds a 4Fe-4S cluster which precludes RNA binding activity and promotes the aconitase activity, the isomerization of citrate to isocitrate via cis-aconitate. In Gallus gallus (Chicken), this protein is Cytoplasmic aconitate hydratase (ACO1).